The sequence spans 139 residues: Putative pre-16S rRNA nuclease (139 aa).

This sequence belongs to the YqgF nuclease family.

The protein localises to the cytoplasm. In terms of biological role, could be a nuclease involved in processing of the 5'-end of pre-16S rRNA. The polypeptide is Putative pre-16S rRNA nuclease (Thermoanaerobacter pseudethanolicus (strain ATCC 33223 / 39E) (Clostridium thermohydrosulfuricum)).